The chain runs to 453 residues: DNA repair protein RadA (453 aa).

The C4-type zinc-finger motif lies at 11–28 (CNQCGATAPKWLGQCPGC). 93–100 (GDPGIGKS) serves as a coordination point for ATP. A RadA KNRFG motif motif is present at residues 250 to 254 (KNRFG). Residues 349–453 (DVFLSITGGL…TIKDAIRLLL (105 aa)) form a lon-protease-like region.

The protein belongs to the RecA family. RadA subfamily.

In terms of biological role, DNA-dependent ATPase involved in processing of recombination intermediates, plays a role in repairing DNA breaks. Stimulates the branch migration of RecA-mediated strand transfer reactions, allowing the 3' invading strand to extend heteroduplex DNA faster. Binds ssDNA in the presence of ADP but not other nucleotides, has ATPase activity that is stimulated by ssDNA and various branched DNA structures, but inhibited by SSB. Does not have RecA's homology-searching function. This Chlamydia pneumoniae (Chlamydophila pneumoniae) protein is DNA repair protein RadA.